A 31-amino-acid polypeptide reads, in one-letter code: Aspartate racemase (31 aa).

The disordered stretch occupies residues 1 to 31 (PVAPEYLFKKEEDKGANKEEEEVAPELGIRA). Over residues 7–18 (LFKKEEDKGANK) the composition is skewed to basic and acidic residues.

The protein belongs to the aspartate/glutamate racemases family. Requires pyridoxal 5'-phosphate as cofactor.

It carries out the reaction L-aspartate = D-aspartate. Its activity is regulated as follows. Inhibited by hydroxylamine, aminooxyacetate, phenylhydrazine and sodium borohydride. Its function is as follows. Highly specific toward aspartate and entirely inactive on glutamate, alanine and serine. This Anadara broughtonii (Blood clam) protein is Aspartate racemase.